The sequence spans 312 residues: Olfactory receptor 52A1 (312 aa).

Topologically, residues 1–27 (MSISNITVYMPSVLTLVGIPGLESVQC) are extracellular. N5 carries an N-linked (GlcNAc...) asparagine glycan. The helical transmembrane segment at 28–48 (WIGIPFCAIYLIAMIGNSLLL) threads the bilayer. Over 49 to 56 (SIIKSERS) the chain is Cytoplasmic. Residues 57-77 (LHEPLYIFLGMLGATDIALAS) form a helical membrane-spanning segment. Topologically, residues 78–101 (SIMPKMLGIFWFNVPEIYFDSCLL) are extracellular. A disulfide bridge links C99 with C182. A helical membrane pass occupies residues 102–122 (QMWFIHTLQGIESGILVAMAL). The Cytoplasmic segment spans residues 123–141 (DRYVAICYPLRHANIFTHQ). Residues 142–162 (LVIQIGTMVVLRAAILVAPCL) form a helical membrane-spanning segment. At 163-199 (VLIKCRFQFYHTTVISHSYCEHMAIVKLAAANVQVNK) the chain is on the extracellular side. The chain crosses the membrane as a helical span at residues 200–220 (IYGLFVAFTVAGFDLTFITLS). Residues 221-240 (YIQIFITVFRLPQKEARFKA) are Cytoplasmic-facing. The helical transmembrane segment at 241–261 (FNTCIAHICVFLQFYLLAFFS) threads the bilayer. At 262–276 (FFTHRFGSHISPYIH) the chain is on the extracellular side. A helical transmembrane segment spans residues 277 to 297 (ILFSSIYLLVPPFLNPLVYGA). At 298 to 312 (KTTQIRIHVVKMFCS) the chain is on the cytoplasmic side.

This sequence belongs to the G-protein coupled receptor 1 family.

It is found in the cell membrane. Odorant receptor. The chain is Olfactory receptor 52A1 (OR52A1) from Homo sapiens (Human).